A 486-amino-acid polypeptide reads, in one-letter code: ATP synthase subunit beta (486 aa).

171–178 (GGAGVGKT) lines the ATP pocket.

It belongs to the ATPase alpha/beta chains family. As to quaternary structure, F-type ATPases have 2 components, CF(1) - the catalytic core - and CF(0) - the membrane proton channel. CF(1) has five subunits: alpha(3), beta(3), gamma(1), delta(1), epsilon(1). CF(0) has three main subunits: a(1), b(2) and c(9-12). The alpha and beta chains form an alternating ring which encloses part of the gamma chain. CF(1) is attached to CF(0) by a central stalk formed by the gamma and epsilon chains, while a peripheral stalk is formed by the delta and b chains.

Its subcellular location is the cell membrane. It carries out the reaction ATP + H2O + 4 H(+)(in) = ADP + phosphate + 5 H(+)(out). In terms of biological role, produces ATP from ADP in the presence of a proton gradient across the membrane. The catalytic sites are hosted primarily by the beta subunits. The sequence is that of ATP synthase subunit beta from Salinispora tropica (strain ATCC BAA-916 / DSM 44818 / JCM 13857 / NBRC 105044 / CNB-440).